The chain runs to 230 residues: MSEIKDIVVQGLWKNNSALVQLLGLCPLLAVTSTATNALGLGLATTLVLTLTNLTVSALRRWTPAEIRIPIYVMIIASVVSAVQMLINAYAFGLYQSLGIFIPLIVTNCIVVGRAEAFAAKKGPWLSALDGFSIGMGATGAMFVLGSLREILGNGTLFDGADSLLGGWAKVLRVEIFHTDSPFLLARLPPGAFIGLGLMLAVKYLIDEKMKKRRAETAPSAVPAGETGKV.

Transmembrane regions (helical) follow at residues Ala-18–Ala-38, Leu-39–Leu-59, Thr-63–Val-83, Leu-86–Val-106, Trp-125–Leu-145, and Pro-182–Val-202.

The protein belongs to the NqrDE/RnfAE family. As to quaternary structure, the complex is composed of six subunits: RsxA, RsxB, RsxC, RsxD, RsxE and RsxG.

It localises to the cell inner membrane. Functionally, part of a membrane-bound complex that couples electron transfer with translocation of ions across the membrane. Required to maintain the reduced state of SoxR. The chain is Ion-translocating oxidoreductase complex subunit E from Salmonella dublin (strain CT_02021853).